The following is a 657-amino-acid chain: THO complex subunit 1 (657 aa).

Methionine 1 is modified (N-acetylmethionine). Position 2 is a phosphoserine (serine 2). Threonine 4 is subject to Phosphothreonine. Lysine 31 participates in a covalent cross-link: Glycyl lysine isopeptide (Lys-Gly) (interchain with G-Cter in SUMO2). Lysine 133 bears the N6-acetyllysine mark. The segment at 133–167 (KNYLLRMCNDLLRRLSKSQNTVFCGRIQLFLARLF) is dock domain; interaction with THOC2. The tract at residues 194-221 (QESTLGQKHTEDREEGMDVEEGEMGDDE) is disordered. Residues 206–221 (REEGMDVEEGEMGDDE) are compositionally biased toward acidic residues. Residues 227–397 (SIPIDYNLYR…WNSWKNEGCP (171 aa)) form a dock domain; interaction with THOC2 region. At lysine 300 the chain carries N6-acetyllysine. Lysine 408 participates in a covalent cross-link: Glycyl lysine isopeptide (Lys-Gly) (interchain with G-Cter in SUMO2). The short motif at 414-430 (RKRAAPEDFLGKGPNKK) is the Nuclear localization signal element. The tract at residues 533-569 (LPPPSEEIKTGEDEDEEDNDALLKENESPDVRRDKPI) is disordered. The residue at position 537 (serine 537) is a Phosphoserine. Threonine 542 carries the post-translational modification Phosphothreonine. Residues 553–569 (ALLKENESPDVRRDKPI) are compositionally biased toward basic and acidic residues. Phosphoserine is present on serine 560. One can recognise a Death domain in the interval 570–653 (TGEQIESFAN…DLAESLTNDT (84 aa)). Lysine 580 participates in a covalent cross-link: Glycyl lysine isopeptide (Lys-Gly) (interchain with G-Cter in SUMO2). A Glycyl lysine isopeptide (Lys-Gly) (interchain with G-Cter in SUMO1); alternate cross-link involves residue lysine 595. A Glycyl lysine isopeptide (Lys-Gly) (interchain with G-Cter in SUMO2); alternate cross-link involves residue lysine 595.

Belongs to the THOC1 family. As to quaternary structure, component of the THO subcomplex, which is composed of THOC1, THOC2, THOC3, THOC5, THOC6 and THOC7. The THO subcomplex interacts with DDX39B to form the THO-DDX39B complex which multimerizes into a 28-subunit tetrameric assembly. Component of the transcription/export (TREX) complex at least composed of ALYREF/THOC4, DDX39B, SARNP/CIP29, CHTOP and the THO subcomplex; in the complex interacts with THOC2, THOC5 and THOC7. TREX seems to have a dynamic structure involving ATP-dependent remodeling. Binds to the hypophosphorylated form of RB1. Interacts with RNA polymerase II. Interacts with LUZP4. Interacts with THOC5. Expression is altered specifically during apoptosis and is accompanied by the appearance of novel forms with smaller apparent molecular mass. In terms of processing, polyubiquitinated, leading to proteasomal degradation; probably involves NEDD4. In the inner ear, specifically expressed in inner and outer hair cells (at protein level).

Its subcellular location is the nucleus. The protein resides in the nucleoplasm. It localises to the nucleus matrix. It is found in the cytoplasm. The protein localises to the cytosol. Functionally, component of the THO subcomplex of the TREX complex which is thought to couple mRNA transcription, processing and nuclear export, and which specifically associates with spliced mRNA and not with unspliced pre-mRNA. Required for efficient export of polyadenylated RNA. The THOC1-THOC2-THOC3 core complex alone is sufficient to bind export factor NXF1-NXT1 and promote ATPase activity of DDX39B. TREX is recruited to spliced mRNAs by a transcription-independent mechanism, binds to mRNA upstream of the exon-junction complex (EJC) and is recruited in a splicing- and cap-dependent manner to a region near the 5' end of the mRNA where it functions in mRNA export to the cytoplasm via the TAP/NXF1 pathway. Regulates transcriptional elongation of a subset of genes. Involved in genome stability by preventing co-transcriptional R-loop formation. May play a role in hair cell formation, hence may be involved in hearing. Its function is as follows. Participates in an apoptotic pathway which is characterized by activation of caspase-6, increases in the expression of BAK1 and BCL2L1 and activation of NF-kappa-B. This pathway does not require p53/TP53, nor does the presence of p53/TP53 affect the efficiency of cell killing. Activates a G2/M cell cycle checkpoint prior to the onset of apoptosis. Apoptosis is inhibited by association with RB1. Essential for early embryonic development. Required for normal gene expression during postnatal testis development. The protein is THO complex subunit 1 (Thoc1) of Mus musculus (Mouse).